The chain runs to 414 residues: DNA primase large subunit PriL (414 aa).

Positions 251, 352, 370, and 376 each coordinate [4Fe-4S] cluster.

This sequence belongs to the eukaryotic-type primase large subunit family. Heterodimer of a small subunit (PriS) and a large subunit (PriL). [4Fe-4S] cluster is required as a cofactor.

In terms of biological role, regulatory subunit of DNA primase, an RNA polymerase that catalyzes the synthesis of short RNA molecules used as primers for DNA polymerase during DNA replication. Stabilizes and modulates the activity of the small subunit, increasing the rate of DNA synthesis, and conferring RNA synthesis capability. The DNA polymerase activity may enable DNA primase to also catalyze primer extension after primer synthesis. May also play a role in DNA repair. In Methanocaldococcus jannaschii (strain ATCC 43067 / DSM 2661 / JAL-1 / JCM 10045 / NBRC 100440) (Methanococcus jannaschii), this protein is DNA primase large subunit PriL.